Reading from the N-terminus, the 418-residue chain is NADH-quinone oxidoreductase subunit D (418 aa).

Belongs to the complex I 49 kDa subunit family. As to quaternary structure, NDH-1 is composed of 14 different subunits. Subunits NuoB, C, D, E, F, and G constitute the peripheral sector of the complex.

It localises to the cell inner membrane. The catalysed reaction is a quinone + NADH + 5 H(+)(in) = a quinol + NAD(+) + 4 H(+)(out). Its function is as follows. NDH-1 shuttles electrons from NADH, via FMN and iron-sulfur (Fe-S) centers, to quinones in the respiratory chain. The immediate electron acceptor for the enzyme in this species is believed to be ubiquinone. Couples the redox reaction to proton translocation (for every two electrons transferred, four hydrogen ions are translocated across the cytoplasmic membrane), and thus conserves the redox energy in a proton gradient. The sequence is that of NADH-quinone oxidoreductase subunit D from Neisseria meningitidis serogroup A / serotype 4A (strain DSM 15465 / Z2491).